Consider the following 486-residue polypeptide: mRNA cap guanine-N(7) methyltransferase (486 aa).

Residues Met-1 to Ala-92 form a disordered region. Composition is skewed to basic and acidic residues over residues Glu-9–His-28, Val-35–Arg-54, and Glu-82–Ala-92. Residues Ser-135–Val-486 form the mRNA cap 0 methyltransferase domain. Residue Asn-144–Asn-145 participates in mRNA binding. S-adenosyl-L-methionine contacts are provided by residues Lys-148, Gly-177, Asp-201, Asp-247, Met-281–Cys-283, and Tyr-286. A compositionally biased stretch (basic and acidic residues) spans Val-333–Gly-351. Positions Val-333–Glu-365 are disordered. A compositionally biased stretch (acidic residues) spans Gly-352–Glu-363.

This sequence belongs to the class I-like SAM-binding methyltransferase superfamily. mRNA cap 0 methyltransferase family.

It is found in the nucleus. It catalyses the reaction a 5'-end (5'-triphosphoguanosine)-ribonucleoside in mRNA + S-adenosyl-L-methionine = a 5'-end (N(7)-methyl 5'-triphosphoguanosine)-ribonucleoside in mRNA + S-adenosyl-L-homocysteine. Functionally, responsible for methylating the 5'-cap structure of mRNAs. In Pyricularia oryzae (strain 70-15 / ATCC MYA-4617 / FGSC 8958) (Rice blast fungus), this protein is mRNA cap guanine-N(7) methyltransferase (ABD1).